Consider the following 361-residue polypeptide: Protein Wnt-2 (361 aa).

An N-terminal signal peptide occupies residues 1–27 (MNASVLGLCLSGPLVLLLAWLAPPVTS). Intrachain disulfides connect Cys77–Cys88, Cys128–Cys136, Cys138–Cys158, Cys207–Cys221, Cys209–Cys216, Cys279–Cys310, Cys295–Cys305, Cys309–Cys349, Cys325–Cys340, Cys327–Cys337, and Cys332–Cys333. Ser213 carries the O-palmitoleoyl serine; by PORCN lipid modification. Asn296 carries an N-linked (GlcNAc...) asparagine glycan.

The protein belongs to the Wnt family. Post-translationally, palmitoleoylation is required for efficient binding to frizzled receptors. Depalmitoleoylation leads to Wnt signaling pathway inhibition.

It is found in the secreted. The protein localises to the extracellular space. Its subcellular location is the extracellular matrix. Functionally, ligand for members of the frizzled family of seven transmembrane receptors. Probable developmental protein. May be a signaling molecule which affects the development of discrete regions of tissues. Is likely to signal over only few cell diameters. The protein is Protein Wnt-2 (WNT2) of Ornithorhynchus anatinus (Duckbill platypus).